The sequence spans 534 residues: Prolyl 4-hydroxylase subunit alpha-1 (534 aa).

Residues 1-17 (MIWYILIIGILLPQSLA) form the signal peptide. Residue N113 is glycosylated (N-linked (GlcNAc...) asparagine). Residues 205–238 (VSVLDYLSYAVYQQGDLDKALLLTKKLLELDPEH) form a TPR repeat. N-linked (GlcNAc...) asparagine glycosylation occurs at N259. One can recognise a Fe2OG dioxygenase domain in the interval 411-519 (TAEELQVANY…KWVSNKWLHE (109 aa)). Fe cation is bound by residues H429, D431, and H500. K510 contacts 2-oxoglutarate.

The protein belongs to the P4HA family. In terms of assembly, heterotetramer of two alpha-1 chains and two beta chains (P4HB)(the beta chain is the multi-functional PDI), where P4HB plays the role of a structural subunit; this tetramer catalyzes the formation of 4-hydroxyproline in collagen. Fe(2+) is required as a cofactor. The cofactor is L-ascorbate. As to expression, expressed in the heart, liver, skeletal muscle, kidney, placenta, lung and pancreas.

It localises to the endoplasmic reticulum lumen. It catalyses the reaction L-prolyl-[collagen] + 2-oxoglutarate + O2 = trans-4-hydroxy-L-prolyl-[collagen] + succinate + CO2. Its activity is regulated as follows. Inhibited by poly(L-proline). In terms of biological role, catalyzes the post-translational formation of 4-hydroxyproline in -Xaa-Pro-Gly- sequences in collagens and other proteins. This chain is Prolyl 4-hydroxylase subunit alpha-1 (P4HA1), found in Homo sapiens (Human).